We begin with the raw amino-acid sequence, 28 residues long: Gastrin-releasing peptide (28 aa).

Position 28 is a methionine amide (M28).

The protein belongs to the bombesin/neuromedin-B/ranatensin family.

The protein resides in the secreted. Its subcellular location is the cytoplasmic vesicle. It localises to the secretory vesicle lumen. Its function is as follows. Stimulates the release of gastrin and other gastrointestinal hormones. The sequence is that of Gastrin-releasing peptide (GRP) from Alligator mississippiensis (American alligator).